Consider the following 539-residue polypeptide: DNA-directed RNA polymerase III subunit RPC3 (539 aa).

Positions 165 to 234 (PMASAESSGT…KAKTDSSECG (70 aa)) are disordered. Low complexity predominate over residues 167–179 (ASAESSGTGSAET). The span at 212–230 (SSEDGEADQRAAKKAKTDS) shows a compositional bias: basic and acidic residues.

This sequence belongs to the eukaryotic RPC3/POLR3C RNA polymerase subunit family. In terms of assembly, component of the RNA polymerase III (Pol III) complex consisting of 17 subunits.

It is found in the nucleus. In terms of biological role, DNA-dependent RNA polymerase catalyzes the transcription of DNA into RNA using the four ribonucleoside triphosphates as substrates. Specific core component of RNA polymerase III which synthesizes small RNAs, such as 5S rRNA and tRNAs. This Danio rerio (Zebrafish) protein is DNA-directed RNA polymerase III subunit RPC3 (polr3c).